Consider the following 884-residue polypeptide: MIQKALGKIFGTKNDRIVKAYAKRVAKINALEPTYEKLSDDELKDKFSKLKEQVLAQKLTLDDALYDVFAIVREASKRVLKMRHFDVQLIGGMVLHDGNIAEMKTGEGKTLVATLPVVLNAMNKKGVHVVTVNDYLAKRDAADMGVLYNFLGFSVGVILGGNYDDKARKEAYNCDITYGTNNEFGFDYLRDNMKFRKEDKVQRGHNFVIVDEVDSILIDEARTPLIISGPTNRTLDGYIKANEVAKQMKCGEPADPLDKNSKATGDFTLDEKNRAVMITEAGISKAEKLFGVDNLYSLDNAVLSHYLDQALKANYLFEKDVHYVVKDGQVVIVDEFTGRLSEGRRFSEGLHQALEAKEGVKIQEESQTLADITFQNYFRLYDKLSGMTGTAQTEATEFSQIYKLEVISIPTNLPVKRIDQNDLIYKTEKEKFDAVIAQIKYLHAKGQPVLVGTASIEKSEKLHELLTKEKINHSVLNAKNHEKEAQIIANAGDKGAVTIATNMAGRGVDIKINDEVRALGGLYILGTERHESRRIDNQLRGRSGRQGDPGESRFYLSLEDNLLRIFGSDKIKHIMERLGLKEGESIESRLVTKAVENAQKKVESLHFESRKYILEYDDVANEQRKVIYRYRNELLEADFDLHDKIISNREDYIANVLDRLEIFDGDSKENFDIQKITSIIKSETTEILDENKLSKAEDYKELKEEIIKELRDFYEEKMAPVDNEQRKSIEKMLYLQIVDRDWREHLYQMDILKTGIGLRGYNHRDPLTEYKKESYNLFVELVMRLKSDSIRTLHSIRFKTQEEIEAERRAIAELQAKLQEEEQKKLKMSGADKGGEDLEETKNVPYRAPKKIGRNEPCPCGSGKKYKDCHGKSGPKKGLFANND.

ATP contacts are provided by residues Q88, 106–110 (GEGKT), and D509. The interval 822–884 (EQKKLKMSGA…PKKGLFANND (63 aa)) is disordered. A compositionally biased stretch (basic and acidic residues) spans 833–842 (KGGEDLEETK). Residues C858, C860, C869, and H870 each contribute to the Zn(2+) site.

The protein belongs to the SecA family. Monomer and homodimer. Part of the essential Sec protein translocation apparatus which comprises SecA, SecYEG and auxiliary proteins SecDF-YajC and YidC. Requires Zn(2+) as cofactor.

The protein resides in the cell inner membrane. It is found in the cytoplasm. The enzyme catalyses ATP + H2O + cellular proteinSide 1 = ADP + phosphate + cellular proteinSide 2.. In terms of biological role, part of the Sec protein translocase complex. Interacts with the SecYEG preprotein conducting channel. Has a central role in coupling the hydrolysis of ATP to the transfer of proteins into and across the cell membrane, serving as an ATP-driven molecular motor driving the stepwise translocation of polypeptide chains across the membrane. The sequence is that of Protein translocase subunit SecA from Campylobacter hominis (strain ATCC BAA-381 / DSM 21671 / CCUG 45161 / LMG 19568 / NCTC 13146 / CH001A).